A 127-amino-acid chain; its full sequence is MNLIQQLEKEQFDKLSANKTIPEFGPGDTVIVNVKVVEGDRTRVQAYEGVCIGRSGGGINESFTVRKISYGEGVERVFPILSPMIDSIKVVRRGKVRRAKLYYLRQLRGKSARIVEKQDRQQAAVNE.

The protein belongs to the bacterial ribosomal protein bL19 family.

Its function is as follows. This protein is located at the 30S-50S ribosomal subunit interface and may play a role in the structure and function of the aminoacyl-tRNA binding site. This is Large ribosomal subunit protein bL19 from Bradyrhizobium sp. (strain BTAi1 / ATCC BAA-1182).